Reading from the N-terminus, the 478-residue chain is Quinoprotein glucose dehydrogenase B (478 aa).

Positions 1–24 are cleaved as a signal peptide; that stretch reads MNKHLLAKIALLSAVQLVTLSAFA. Positions 100 and 167 each coordinate D-glucose. Catalysis depends on histidine 168, which acts as the Proton acceptor. The D-glucose site is built by glutamine 192 and arginine 252. Positions 252 to 253 are PQQ; the sequence is RN. The Ca(2+) site is built by glycine 271, proline 272, glutamate 277, tyrosine 287, alanine 293, tyrosine 295, aspartate 297, and glutamate 333. Pyrroloquinoline quinone-binding residues include tyrosine 367, threonine 372, and lysine 401. Residues 430–432 are PQQ; it reads RYR.

It belongs to the PQQ oxidoreductase GdhB family. Homodimer. It depends on pyrroloquinoline quinone as a cofactor. Ca(2+) serves as cofactor.

It catalyses the reaction a ubiquinone + D-glucose = D-glucono-1,5-lactone + a ubiquinol. Its function is as follows. Oxidizes glucose to gluconolactone. This is Quinoprotein glucose dehydrogenase B (gdhB) from Acinetobacter calcoaceticus.